Consider the following 207-residue polypeptide: Ribosomal RNA large subunit methyltransferase E (207 aa).

Gly61, Trp63, Asp81, Asp97, and Asp122 together coordinate S-adenosyl-L-methionine. The active-site Proton acceptor is the Lys162.

Belongs to the class I-like SAM-binding methyltransferase superfamily. RNA methyltransferase RlmE family.

The protein localises to the cytoplasm. The catalysed reaction is uridine(2552) in 23S rRNA + S-adenosyl-L-methionine = 2'-O-methyluridine(2552) in 23S rRNA + S-adenosyl-L-homocysteine + H(+). Specifically methylates the uridine in position 2552 of 23S rRNA at the 2'-O position of the ribose in the fully assembled 50S ribosomal subunit. The polypeptide is Ribosomal RNA large subunit methyltransferase E (Pseudomonas putida (strain ATCC 700007 / DSM 6899 / JCM 31910 / BCRC 17059 / LMG 24140 / F1)).